The following is a 438-amino-acid chain: Gamma-glutamyl phosphate reductase (438 aa).

The protein belongs to the gamma-glutamyl phosphate reductase family.

It is found in the cytoplasm. It carries out the reaction L-glutamate 5-semialdehyde + phosphate + NADP(+) = L-glutamyl 5-phosphate + NADPH + H(+). It functions in the pathway amino-acid biosynthesis; L-proline biosynthesis; L-glutamate 5-semialdehyde from L-glutamate: step 2/2. Catalyzes the NADPH-dependent reduction of L-glutamate 5-phosphate into L-glutamate 5-semialdehyde and phosphate. The product spontaneously undergoes cyclization to form 1-pyrroline-5-carboxylate. This is Gamma-glutamyl phosphate reductase from Natronomonas pharaonis (strain ATCC 35678 / DSM 2160 / CIP 103997 / JCM 8858 / NBRC 14720 / NCIMB 2260 / Gabara) (Halobacterium pharaonis).